The sequence spans 450 residues: Glycerol dehydrogenase 1 (450 aa).

NAD(+) is bound by residues D99, 155–159, and 177–180; these read GKTMD and TTAS. Substrate is bound at residue D182. S186, L188, and Y192 together coordinate NAD(+). Substrate contacts are provided by D232, H315, and H333. Residues D232, H315, and H333 each contribute to the Zn(2+) site.

Belongs to the iron-containing alcohol dehydrogenase family. It depends on Zn(2+) as a cofactor.

Its subcellular location is the mitochondrion. The catalysed reaction is glycerol + NAD(+) = dihydroxyacetone + NADH + H(+). Its pathway is polyol metabolism; glycerol fermentation; glycerone phosphate from glycerol (oxidative route): step 1/2. Glycerol dehydrogenase involved in the assimilation of glycerol. The protein is Glycerol dehydrogenase 1 (gld1) of Schizosaccharomyces pombe (strain 972 / ATCC 24843) (Fission yeast).